A 497-amino-acid chain; its full sequence is MVEELKNDAQTNEEESEYSDFSDGSDNDYFREDDIDWNQASSNYSARQENFGNNSSKINSVNDHVSTLSRYVNNIKLNDRFEAEDKSSIKDKSDRATSEQVLDPRTRMILLKLINNGTISEINGCISTGKEANVYHATNEDGKHFAIKIYKTSILVFKDRDRYVSGEFRFRHGYNKRNPRKMVRLWAEKEIRNLKRVAAAGIPCPEPILLKQHVLLMSFLGDKKGWAYPKLKDIDMTPGEATKLYQLVARNMRILFHVCHLVHADLSEYNLLYHKGKVYFIDVSQSVEHDHPQSIDFLRMDILNISTFFRRLNAGCLSLPQLFKFITEEGSCEKEAMKTRLNAIYEEEPTTEEYEEEFLKTYVPRTLDEVYDIDRDTEIVNAGGVNSLVYKHLLNTDFQKLDLNDTTKNQNDQILPNETSESDDDANSISSMENEEERTSDSKSSAKQGKGNGRAKETPEEKRARKKKTKEDKAEKRKSKIPKYEKKRKLKQSGRKK.

Residues 1 to 35 (MVEELKNDAQTNEEESEYSDFSDGSDNDYFREDDI) form a disordered region. Over residues 11 to 35 (TNEEESEYSDFSDGSDNDYFREDDI) the composition is skewed to acidic residues. The Protein kinase domain maps to 120 to 415 (SEINGCISTG…TTKNQNDQIL (296 aa)). Lys-148 and Leu-220 together coordinate ATP. The Proton acceptor role is filled by Asp-265. Mg(2+)-binding residues include Asn-270 and Asp-282. Asp-282 serves as the catalytic 4-aspartylphosphate intermediate. The span at 407 to 419 (TKNQNDQILPNET) shows a compositional bias: polar residues. The tract at residues 407–497 (TKNQNDQILP…RKLKQSGRKK (91 aa)) is disordered. Residues 454 to 475 (RAKETPEEKRARKKKTKEDKAE) are compositionally biased toward basic and acidic residues. Residues 476–497 (KRKSKIPKYEKKRKLKQSGRKK) are compositionally biased toward basic residues.

This sequence belongs to the protein kinase superfamily. RIO-type Ser/Thr kinase family. It depends on Mg(2+) as a cofactor.

The protein localises to the cytoplasm. It catalyses the reaction L-seryl-[protein] + ATP = O-phospho-L-seryl-[protein] + ADP + H(+). The catalysed reaction is L-threonyl-[protein] + ATP = O-phospho-L-threonyl-[protein] + ADP + H(+). The enzyme catalyses ATP + H2O = ADP + phosphate + H(+). Functionally, required for the final endonucleolytic cleavage at site D converting 20S pre-rRNA into the mature 18S rRNA. Required for the final steps of cytoplasmic maturation of the 40S ribosomal subunit. Despite the protein kinase domain is proposed to act predominantly as an ATPase. In Schizosaccharomyces pombe (strain 972 / ATCC 24843) (Fission yeast), this protein is Serine/threonine-protein kinase rio1 (rio1).